A 350-amino-acid polypeptide reads, in one-letter code: Farnesyl pyrophosphate synthase (350 aa).

Isopentenyl diphosphate-binding residues include Lys55, Arg58, and Gln94. Residues Asp101 and Asp105 each contribute to the Mg(2+) site. Arg110 contributes to the dimethylallyl diphosphate binding site. Residue Arg111 coordinates isopentenyl diphosphate. Dimethylallyl diphosphate-binding residues include Lys198, Thr199, Gln237, Lys254, and Lys263.

It belongs to the FPP/GGPP synthase family. Mg(2+) serves as cofactor.

It is found in the cytoplasm. The enzyme catalyses isopentenyl diphosphate + dimethylallyl diphosphate = (2E)-geranyl diphosphate + diphosphate. It catalyses the reaction isopentenyl diphosphate + (2E)-geranyl diphosphate = (2E,6E)-farnesyl diphosphate + diphosphate. It participates in isoprenoid biosynthesis; farnesyl diphosphate biosynthesis; farnesyl diphosphate from geranyl diphosphate and isopentenyl diphosphate: step 1/1. The protein operates within isoprenoid biosynthesis; geranyl diphosphate biosynthesis; geranyl diphosphate from dimethylallyl diphosphate and isopentenyl diphosphate: step 1/1. In terms of biological role, catalyzes the sequential condensation of isopentenyl pyrophosphate with the allylic pyrophosphates, dimethylallyl pyrophosphate, and then with the resultant geranylpyrophosphate to the ultimate product farnesyl pyrophosphate. This chain is Farnesyl pyrophosphate synthase (FPS), found in Zea mays (Maize).